A 557-amino-acid chain; its full sequence is Beta-amylase 2, chloroplastic (557 aa).

The N-terminal 38 residues, 1–38 (MMSLNLAHQTGAAAAVAPAAPRTAVVAAAAGTVSAPAV), are a transit peptide targeting the chloroplast. Substrate is bound by residues Asp-135, His-175, and Asp-183. Glu-267 functions as the Proton donor in the catalytic mechanism. Residues Lys-380, His-385, and Thr-427 each contribute to the substrate site. Glu-465 functions as the Proton acceptor in the catalytic mechanism. Substrate is bound by residues 466–467 (NA) and Arg-499.

This sequence belongs to the glycosyl hydrolase 14 family.

It is found in the plastid. The protein localises to the chloroplast. It carries out the reaction Hydrolysis of (1-&gt;4)-alpha-D-glucosidic linkages in polysaccharides so as to remove successive maltose units from the non-reducing ends of the chains.. Functionally, possesses beta-amylase activity in vitro. May be involved in cold resistance by mediating the accumulation of maltose upon freezing stress, thus contributing to the protection of membranes. This chain is Beta-amylase 2, chloroplastic, found in Oryza sativa subsp. japonica (Rice).